A 519-amino-acid polypeptide reads, in one-letter code: Methionine--tRNA ligase (519 aa).

The 'HIGH' region motif lies at 11-21 (AYPNAAPHVGH). The 'KMSKS' region motif lies at 299 to 303 (KMSKS). Lys302 serves as a coordination point for ATP. The disordered stretch occupies residues 500-519 (LPPPTGVFPRYQPPQPPEGK).

The protein belongs to the class-I aminoacyl-tRNA synthetase family. MetG type 2B subfamily. In terms of assembly, monomer.

The protein localises to the cytoplasm. The enzyme catalyses tRNA(Met) + L-methionine + ATP = L-methionyl-tRNA(Met) + AMP + diphosphate. In terms of biological role, is required not only for elongation of protein synthesis but also for the initiation of all mRNA translation through initiator tRNA(fMet) aminoacylation. The polypeptide is Methionine--tRNA ligase (metG) (Mycobacterium tuberculosis (strain CDC 1551 / Oshkosh)).